A 223-amino-acid chain; its full sequence is uncharacterized protein (223 aa).

Positions 1–30 are disordered; the sequence is MASATVRNVPLLDDDTIPFGEEDEMRDPSR. A compositionally biased stretch (acidic residues) spans 12-25; the sequence is LDDDTIPFGEEDEM. Helical transmembrane passes span 35 to 55, 56 to 76, 129 to 149, and 154 to 174; these read YTHP…ILIY, MFCG…VLFL, IFWL…LFAL, and FKWL…LYGY.

The protein belongs to the TVP23 family.

The protein resides in the membrane. This is an uncharacterized protein from Drosophila melanogaster (Fruit fly).